Here is a 127-residue protein sequence, read N- to C-terminus: Venom protein family 16 protein 1 (127 aa).

The N-terminal stretch at 1-18 (MWIWYSLLFFGVCHLAHS) is a signal peptide.

Expressed by the venom gland (anterior main gland) (at protein level).

Its subcellular location is the secreted. The chain is Venom protein family 16 protein 1 from Platymeris rhadamanthus (Red spot assassin bug).